The following is a 158-amino-acid chain: NADH-quinone oxidoreductase subunit B (158 aa).

4 residues coordinate [4Fe-4S] cluster: Cys37, Cys38, Cys102, and Cys132.

Belongs to the complex I 20 kDa subunit family. NDH-1 is composed of 14 different subunits. Subunits NuoB, C, D, E, F, and G constitute the peripheral sector of the complex. [4Fe-4S] cluster is required as a cofactor.

It localises to the cell inner membrane. The enzyme catalyses a quinone + NADH + 5 H(+)(in) = a quinol + NAD(+) + 4 H(+)(out). Functionally, NDH-1 shuttles electrons from NADH, via FMN and iron-sulfur (Fe-S) centers, to quinones in the respiratory chain. Couples the redox reaction to proton translocation (for every two electrons transferred, four hydrogen ions are translocated across the cytoplasmic membrane), and thus conserves the redox energy in a proton gradient. In Hydrogenovibrio crunogenus (strain DSM 25203 / XCL-2) (Thiomicrospira crunogena), this protein is NADH-quinone oxidoreductase subunit B.